The following is a 258-amino-acid chain: Proteasome subunit beta type-1 (258 aa).

It belongs to the peptidase T1B family. As to quaternary structure, the 26S proteasome consists of a 20S proteasome core and two 19S regulatory subunits. The 20S proteasome core is composed of 28 subunits that are arranged in four stacked rings, resulting in a barrel-shaped structure. The two end rings are each formed by seven alpha subunits, and the two central rings are each formed by seven beta subunits. The catalytic chamber with the active sites is on the inside of the barrel.

The protein localises to the cytoplasm. It localises to the nucleus. In terms of biological role, non-catalytic component of the proteasome, a multicatalytic proteinase complex which is characterized by its ability to cleave peptides with Arg, Phe, Tyr, Leu, and Glu adjacent to the leaving group at neutral or slightly basic pH. The proteasome has an ATP-dependent proteolytic activity. This is Proteasome subunit beta type-1 (pbs-6) from Caenorhabditis elegans.